A 359-amino-acid polypeptide reads, in one-letter code: MRKIVHVDMDAFYASVEQRDDPSLRGKPVVVAWRGARSVVCAASYEARTFGIRSAMPAVRAERLCPDAVFVPPDFARYKAVSRQVREIFHRHTDLVEPLSLDEAYLDVTEAKTGMQLATEIAQLIRTQIREETQLTASAGIAPNKFLAKIASDWRKPDGQFVIAPSRVDAFLLPLPVNRIPGVGKVMDGKLAALGIVTVSDLRLRPLEELQAHFGSFGQSLYRRARGIDERPVEPDQEVQSVSSEDTFSEDLALDALDPHIQRLAEKTWHATRRTERIGRTVVLKLKTSNFRILTRSYTPEQPPASLQGLVDIALGLTRRVELPPETRYRLVGVGLSGFSDPELQAAVQGELFGEVPQQ.

The UmuC domain occupies Ile-4–Gly-184. The Mg(2+) site is built by Asp-8 and Asp-102. Glu-103 is a catalytic residue.

Belongs to the DNA polymerase type-Y family. In terms of assembly, monomer. It depends on Mg(2+) as a cofactor.

It localises to the cytoplasm. It catalyses the reaction DNA(n) + a 2'-deoxyribonucleoside 5'-triphosphate = DNA(n+1) + diphosphate. Functionally, poorly processive, error-prone DNA polymerase involved in untargeted mutagenesis. Copies undamaged DNA at stalled replication forks, which arise in vivo from mismatched or misaligned primer ends. These misaligned primers can be extended by PolIV. Exhibits no 3'-5' exonuclease (proofreading) activity. May be involved in translesional synthesis, in conjunction with the beta clamp from PolIII. The chain is DNA polymerase IV from Xanthomonas campestris pv. campestris (strain 8004).